A 133-amino-acid chain; its full sequence is Protein PsiE homolog (133 aa).

4 consecutive transmembrane segments (helical) span residues 13-33 (LQWI…IFLI), 55-75 (VESI…IKYF), 81-101 (FPLR…IIVS), and 105-125 (PMET…LYIS).

The protein belongs to the PsiE family.

The protein localises to the cell membrane. The sequence is that of Protein PsiE homolog from Bacillus cereus (strain ATCC 10987 / NRS 248).